The chain runs to 767 residues: Bifunctional lysine-specific demethylase and histidyl-hydroxylase NO66 (767 aa).

The tract at residues 21–324 (TVSQKQQREK…GRQEAHRQNS (304 aa)) is disordered. At Ser44 the chain carries Phosphoserine. The span at 46–71 (SDDDDEDDGEGEDDNDSNSDEDESGS) shows a compositional bias: acidic residues. Residues 72–81 (ESDATSADDS) show a composition bias toward low complexity. The segment covering 82–98 (FSSDDNDDDDSGDEDGS) has biased composition (acidic residues). 2 stretches are compositionally biased toward polar residues: residues 127–137 (YTINSENSSVE) and 177–199 (ESAT…TSKP). Ser214 carries the phosphoserine modification. Positions 262–279 (PSSSGASCPLPSKTSKQV) are enriched in polar residues. Residues 315 to 324 (GRQEAHRQNS) show a composition bias toward basic and acidic residues. Positions 420–565 (CSIRILNPST…NLLEKLMPMV (146 aa)) constitute a JmjC domain. Fe cation-binding residues include His466, Asp468, and His531.

Belongs to the ROX family. NO66 subfamily. Fe(2+) is required as a cofactor.

It localises to the nucleus. The catalysed reaction is N(6),N(6)-dimethyl-L-lysyl(36)-[histone H3] + 2 2-oxoglutarate + 2 O2 = L-lysyl(36)-[histone H3] + 2 formaldehyde + 2 succinate + 2 CO2. Functionally, oxygenase that can act as both a histone lysine demethylase and a ribosomal histidine hydroxylase. Specifically demethylates 'Lys-4' (H3K4me) and 'Lys-36' (H3K36me) of histone H3, thereby playing a central role in histone code. The sequence is that of Bifunctional lysine-specific demethylase and histidyl-hydroxylase NO66 from Drosophila willistoni (Fruit fly).